Reading from the N-terminus, the 396-residue chain is Tryptophan synthase beta chain (396 aa).

At Lys90 the chain carries N6-(pyridoxal phosphate)lysine.

The protein belongs to the TrpB family. In terms of assembly, tetramer of two alpha and two beta chains. Pyridoxal 5'-phosphate serves as cofactor.

The catalysed reaction is (1S,2R)-1-C-(indol-3-yl)glycerol 3-phosphate + L-serine = D-glyceraldehyde 3-phosphate + L-tryptophan + H2O. The protein operates within amino-acid biosynthesis; L-tryptophan biosynthesis; L-tryptophan from chorismate: step 5/5. Functionally, the beta subunit is responsible for the synthesis of L-tryptophan from indole and L-serine. The chain is Tryptophan synthase beta chain from Clostridium kluyveri (strain NBRC 12016).